A 72-amino-acid polypeptide reads, in one-letter code: BBSome-interacting protein 1 (72 aa).

The protein belongs to the BBIP10 family.

It localises to the cell projection. The protein resides in the cilium. It is found in the cytoplasm. Required for primary cilia assembly. The polypeptide is BBSome-interacting protein 1 (bbip1) (Danio rerio (Zebrafish)).